The chain runs to 507 residues: GMP synthase [glutamine-hydrolyzing] (507 aa).

A Glutamine amidotransferase type-1 domain is found at 4–193; it reads KIIILDFGSQ…VVDVCGCKQD (190 aa). The active-site Nucleophile is the Cys79. Active-site residues include His167 and Glu169. Positions 194-382 constitute a GMPS ATP-PPase domain; the sequence is WSPASFIEST…LGMPEHLITR (189 aa). An ATP-binding site is contributed by 221-227; the sequence is SGGVDSS.

Homodimer.

It catalyses the reaction XMP + L-glutamine + ATP + H2O = GMP + L-glutamate + AMP + diphosphate + 2 H(+). The protein operates within purine metabolism; GMP biosynthesis; GMP from XMP (L-Gln route): step 1/1. In terms of biological role, catalyzes the synthesis of GMP from XMP. This is GMP synthase [glutamine-hydrolyzing] from Bacteroides fragilis (strain ATCC 25285 / DSM 2151 / CCUG 4856 / JCM 11019 / LMG 10263 / NCTC 9343 / Onslow / VPI 2553 / EN-2).